A 570-amino-acid chain; its full sequence is Adenine deaminase (570 aa).

The protein belongs to the metallo-dependent hydrolases superfamily. Adenine deaminase family. Requires Mn(2+) as cofactor.

It catalyses the reaction adenine + H2O + H(+) = hypoxanthine + NH4(+). This is Adenine deaminase from Clostridium acetobutylicum (strain ATCC 824 / DSM 792 / JCM 1419 / IAM 19013 / LMG 5710 / NBRC 13948 / NRRL B-527 / VKM B-1787 / 2291 / W).